A 164-amino-acid chain; its full sequence is 2-keto-3-deoxy-D-glycero-D-galacto-9-phosphonononic acid phosphatase (164 aa).

Mg(2+) is bound by residues Asp10 and Asp12. Substrate is bound by residues Thr34, 54-56 (TGE), 64-67 (RAEK), and Lys80. Asp103 contacts Mg(2+). Asn106 contributes to the substrate binding site.

Belongs to the KdsC family. As to quaternary structure, homotetramer. It depends on Mg(2+) as a cofactor.

The catalysed reaction is 3-deoxy-D-glycero-beta-D-galacto-non-2-ulopyranosonate 9-phosphate + H2O = 3-deoxy-D-glycero-beta-D-galacto-non-2-ulopyranosonate + phosphate. In terms of biological role, involved in the biosynthesis of 2-keto-3-deoxy-D-glycero-D-galacto-nononic acid used in cell-wall polysaccharides. Catalyzes the hydrolysis of 2-keto-3-deoxy-D-glycero-D-galacto-9-phosphonononic acid (KDN-9-P) to yield 2-keto-3-deoxy-D-glycero-D-galacto-nononic acid (KDN). Also able to hydrolyze N-acetylneuraminate-9-phosphate (Neu5NAc-9-P), 2-keto-3-deoxy-D-manno-octulosonate-8-phosphate (KDO-8-P), phosphoenolpyruvate (PEP), gluconate 6-phosphate, tyrosine phosphate ester and glucose-6-P as substrate. The protein is 2-keto-3-deoxy-D-glycero-D-galacto-9-phosphonononic acid phosphatase of Bacteroides thetaiotaomicron (strain ATCC 29148 / DSM 2079 / JCM 5827 / CCUG 10774 / NCTC 10582 / VPI-5482 / E50).